The primary structure comprises 495 residues: Lysine--tRNA ligase (495 aa).

Positions 406 and 413 each coordinate Mg(2+).

This sequence belongs to the class-II aminoacyl-tRNA synthetase family. Homodimer. It depends on Mg(2+) as a cofactor.

It is found in the cytoplasm. The catalysed reaction is tRNA(Lys) + L-lysine + ATP = L-lysyl-tRNA(Lys) + AMP + diphosphate. The chain is Lysine--tRNA ligase (lysS) from Staphylococcus aureus.